We begin with the raw amino-acid sequence, 338 residues long: HLA class I histocompatibility antigen, alpha chain G (338 aa).

The N-terminal stretch at 1-24 (MVVMAPRTLFLLLSGALTLTETWA) is a signal peptide. Residues 3 to 11 (VMAPRTLFL) form a VL9 epitope region. Residues 25–114 (GSHSMRYFSA…LRGYYNQSEA (90 aa)) are alpha-1. The Extracellular segment spans residues 25–308 (GSHSMRYFSA…KQSSLPTIPI (284 aa)). A peptide antigen is bound by residues Tyr31, His94, Asn101, and Tyr108. N-linked (GlcNAc...) asparagine glycosylation occurs at Asn110. The segment at 115 to 206 (SSHTLQWMIG…ENGKEMLQRA (92 aa)) is alpha-2. The cysteines at positions 125 and 188 are disulfide-linked. 6 residues coordinate a peptide antigen: Ser167, Lys170, Gln179, Arg180, Tyr183, and Tyr195. Positions 207 to 298 (DPPKTHVTHH…GLPEPLMLRW (92 aa)) are alpha-3. An Ig-like C1-type domain is found at 209 to 299 (PKTHVTHHPV…LPEPLMLRWK (91 aa)). Residues Cys227 and Cys283 are joined by a disulfide bond. Residues 299 to 308 (KQSSLPTIPI) are connecting peptide. Residues 309–332 (MGIVAGLVVLAAVVTGAAVAAVLW) form a helical membrane-spanning segment. Topologically, residues 333-338 (RKKSSD) are cytoplasmic. The ER-retrieval signal motif lies at 334 to 336 (KKS).

Belongs to the MHC class I family. Forms a heterotrimer with B2M and a self-peptide (peptide-bound HLA-G-B2M). HLA-G-B2M complex interacts with components of the antigen processing machinery TAPBP and TAP1-TAP2 complex; this interaction is required for loading of high affinity peptides and heterotrimer translocation to the cell surface. Interacts with CALCR; this interaction is required for appropriate folding. Interacts with COPB1; this interaction mediates the endoplasmic reticulum (ER) retrieval of HLA-G-B2M complexes that bind low affinity peptides. On the cell surface, peptide-bound HLA-G-B2M molecules (referred to as monomers) can form disulfide-linked homomultimers, homodimers and homotrimers. Interacts with KIR2DL4; this interaction is direct. Interacts with LILRB1 and LILRB2 receptors; this interaction is direct. Interacts with CD160; this interactions is direct. Interacts with CD8A homodimer; this interaction is direct and might down-regulate T cell receptor signaling. Isoform 2: Forms a non-disulfide-linked homodimer and interacts with LILRB2. In terms of processing, N-glycosylated. Post-translationally, produced by proteolytic cleavage at the cell surface (shedding) by matrix metalloproteinase MMP2. In terms of tissue distribution, expressed in adult eye. Expressed in immune cell subsets including monocytes, myeloid and plasmacytoid dendritic cells and regulatory T cells (Tr1)(at protein level). Secreted by follicular dendritic cell and follicular helper T cells. Detected in physiological fluids including amniotic fluid and serum. As to expression, expressed in placenta, amniotic membrane, skin, cord blood and peripheral blood mononuclear cells.

The protein localises to the cell membrane. It localises to the endoplasmic reticulum membrane. It is found in the early endosome membrane. The protein resides in the secreted. Its subcellular location is the early endosome. The protein localises to the cell projection. It localises to the filopodium membrane. Its function is as follows. Non-classical major histocompatibility class Ib molecule involved in immune regulatory processes at the maternal-fetal interface. In complex with B2M/beta-2 microglobulin binds a limited repertoire of nonamer self-peptides derived from intracellular proteins including histones and ribosomal proteins. Peptide-bound HLA-G-B2M complex acts as a ligand for inhibitory/activating KIR2DL4, LILRB1 and LILRB2 receptors on uterine immune cells to promote fetal development while maintaining maternal-fetal tolerance. Upon interaction with KIR2DL4 and LILRB1 receptors on decidual NK cells, it triggers NK cell senescence-associated secretory phenotype as a molecular switch to promote vascular remodeling and fetal growth in early pregnancy. Through interaction with KIR2DL4 receptor on decidual macrophages induces pro-inflammatory cytokine production mainly associated with tissue remodeling. Through interaction with LILRB2 receptor triggers differentiation of type 1 regulatory T cells and myeloid-derived suppressor cells, both of which actively maintain maternal-fetal tolerance. May play a role in balancing tolerance and antiviral-immunity at maternal-fetal interface by keeping in check the effector functions of NK, CD8+ T cells and B cells. Reprograms B cells toward an immune suppressive phenotype via LILRB1. May induce immune activation/suppression via intercellular membrane transfer (trogocytosis), likely enabling interaction with KIR2DL4, which resides mostly in endosomes. Through interaction with the inhibitory receptor CD160 on endothelial cells may control angiogenesis in immune privileged sites. Likely does not bind B2M and presents peptides. Negatively regulates NK cell- and CD8+ T cell-mediated cytotoxicity. In terms of biological role, non-classical major histocompatibility class Ib molecule involved in immune regulatory processes at the maternal-fetal interface. In complex with B2M/beta-2 microglobulin binds a limited repertoire of nonamer self-peptides derived from intracellular proteins including histones and ribosomal proteins. Peptide-bound HLA-G-B2M complex acts as a ligand for inhibitory/activating KIR2DL4, LILRB1 and LILRB2 receptors on uterine immune cells to promote fetal development while maintaining maternal-fetal tolerance. Upon interaction with KIR2DL4 and LILRB1 receptors on decidual NK cells, it triggers NK cell senescence-associated secretory phenotype as a molecular switch to promote vascular remodeling and fetal growth in early pregnancy. Through interaction with KIR2DL4 receptor on decidual macrophages induces pro-inflammatory cytokine production mainly associated with tissue remodeling. Through interaction with LILRB2 receptor triggers differentiation of type 1 regulatory T cells and myeloid-derived suppressor cells, both of which actively maintain maternal-fetal tolerance. Reprograms B cells toward an immune suppressive phenotype via LILRB1. Functionally, likely does not bind B2M and presents peptides. This chain is HLA class I histocompatibility antigen, alpha chain G, found in Homo sapiens (Human).